The primary structure comprises 170 residues: 3-isopropylmalate dehydratase small subunit 1 (170 aa).

This sequence belongs to the LeuD family. LeuD type 2 subfamily. In terms of assembly, heterodimer of LeuC and LeuD.

It catalyses the reaction (2R,3S)-3-isopropylmalate = (2S)-2-isopropylmalate. It participates in amino-acid biosynthesis; L-leucine biosynthesis; L-leucine from 3-methyl-2-oxobutanoate: step 2/4. Its function is as follows. Catalyzes the isomerization between 2-isopropylmalate and 3-isopropylmalate, via the formation of 2-isopropylmaleate. The protein is 3-isopropylmalate dehydratase small subunit 1 (leuD1) of Methanopyrus kandleri (strain AV19 / DSM 6324 / JCM 9639 / NBRC 100938).